We begin with the raw amino-acid sequence, 293 residues long: Homoserine kinase (293 aa).

84-94 contacts ATP; sequence PISRGLGSSSA.

It belongs to the GHMP kinase family. Homoserine kinase subfamily.

Its subcellular location is the cytoplasm. It carries out the reaction L-homoserine + ATP = O-phospho-L-homoserine + ADP + H(+). Its pathway is amino-acid biosynthesis; L-threonine biosynthesis; L-threonine from L-aspartate: step 4/5. Catalyzes the ATP-dependent phosphorylation of L-homoserine to L-homoserine phosphate. The protein is Homoserine kinase of Wolinella succinogenes (strain ATCC 29543 / DSM 1740 / CCUG 13145 / JCM 31913 / LMG 7466 / NCTC 11488 / FDC 602W) (Vibrio succinogenes).